The sequence spans 380 residues: DNA replication and repair protein RecF (380 aa).

Residue glycine 30 to serine 37 coordinates ATP.

The protein belongs to the RecF family.

Its subcellular location is the cytoplasm. Functionally, the RecF protein is involved in DNA metabolism; it is required for DNA replication and normal SOS inducibility. RecF binds preferentially to single-stranded, linear DNA. It also seems to bind ATP. This is DNA replication and repair protein RecF from Crocosphaera subtropica (strain ATCC 51142 / BH68) (Cyanothece sp. (strain ATCC 51142)).